The primary structure comprises 918 residues: uncharacterized protein (918 aa).

Disordered stretches follow at residues 66–150 (AMVH…SSYG), 226–283 (GADG…NADF), 326–481 (ADGT…EFGN), 515–548 (ALEK…GSNL), 594–707 (EITH…NAVK), 737–774 (NHSN…SHLT), and 800–918 (HITH…IIQM). A compositionally biased stretch (low complexity) spans 79–89 (QSSGSSSNTHS). Residues 103–127 (NSEKKDGYNKESKVDEANENTKIKS) show a composition bias toward basic and acidic residues. Residues 270 to 281 (SKKAASASGSNA) are compositionally biased toward low complexity. Composition is skewed to polar residues over residues 326–354 (ADGT…SSDL), 363–372 (KSHSTSNKTD), and 379–404 (ANQS…SSIE). Residues 430-441 (SSSHSKSASGTS) are compositionally biased toward low complexity. Over residues 515–533 (ALEKNHEKNSDGTFKDESK) the composition is skewed to basic and acidic residues. Polar residues-rich tracts occupy residues 534–545 (GSNSRVNRTDGG) and 604–619 (VAAS…TSMS). Positions 632-647 (SSQAADSHDAISASSD) are enriched in low complexity. The span at 648 to 660 (VDAKIVKHADRSE) shows a compositional bias: basic and acidic residues. Positions 661–672 (SISNDSSNQTAS) are enriched in polar residues. Over residues 673–688 (EHNDSSKQSEHEKRQN) the composition is skewed to basic and acidic residues. Residues 689–702 (ADGSFSDVSSNSAK) show a composition bias toward polar residues. 4 stretches are compositionally biased toward basic and acidic residues: residues 738 to 765 (HSND…DAKH), 800 to 814 (HITH…DAGH), 830 to 846 (EGFK…EGAQ), and 883 to 918 (LAKD…IIQM).

This is an uncharacterized protein from Caenorhabditis elegans.